A 392-amino-acid chain; its full sequence is Protein O-glucosyltransferase 1 (392 aa).

A signal peptide spans 1 to 23 (MERLSGCRLRPWMLLLLLFPVQG). Cystine bridges form between Cys49–Cys56, Cys54–Cys357, Cys102–Cys108, and Cys263–Cys286. N-linked (GlcNAc...) asparagine glycosylation is present at Asn53. An interaction with the consensus sequence C-X-S-X-[PA]-C in peptide substrates region spans residues 103–107 (MFPSR). The active-site Proton donor/acceptor is the Asp133. Positions 172-178 (AVWPLYP) are interaction with the consensus sequence C-X-S-X-[PA]-C in peptide substrates. A UDP-alpha-D-glucose-binding site is contributed by Tyr177. A glycan (N-linked (GlcNAc...) asparagine) is linked at Asn204. UDP-alpha-D-glucose-binding positions include Ser212, Arg218, and 274–279 (VAASFR). Asn373 carries an N-linked (GlcNAc...) asparagine glycan. The Prevents secretion from ER motif lies at 389–392 (KTEL).

It belongs to the glycosyltransferase 90 family.

The protein localises to the endoplasmic reticulum lumen. It catalyses the reaction L-seryl-[EGF-like domain protein] + UDP-alpha-D-xylose = 3-O-(beta-D-xylosyl)-L-seryl-[EGF-like domain protein] + UDP + H(+). It carries out the reaction L-seryl-[EGF-like domain protein] + UDP-alpha-D-glucose = 3-O-(beta-D-glucosyl)-L-seryl-[EGF-like domain protein] + UDP + H(+). Its pathway is protein modification; protein glycosylation. Functionally, dual specificity glycosyltransferase that catalyzes the transfer of glucose and xylose from UDP-glucose and UDP-xylose, respectively, to a serine residue found in the consensus sequence of C-X-S-X-P-C. Specifically targets extracellular EGF repeats of protein such as CRB2, F7, F9 and NOTCH2. Acts as a positive regulator of Notch signaling by mediating O-glucosylation of Notch, leading to regulate muscle development. Notch glucosylation does not affect Notch ligand binding. Required during early development to promote gastrulation: acts by mediating O-glucosylation of CRB2, which is required for CRB2 localization to the cell membrane. The protein is Protein O-glucosyltransferase 1 (Poglut1) of Rattus norvegicus (Rat).